The following is a 1314-amino-acid chain: Ubinuclein-2 (1314 aa).

A disordered region spans residues 1 to 113; the sequence is MAEPRRVAFI…PPPRPPKETV (113 aa). Ser-13 bears the Phosphoserine mark. Composition is skewed to basic and acidic residues over residues 16–31 and 55–67; these read RRREADFAGAEREPPR and ARDKPLPQREVSR. Residues 81 to 96 show a composition bias toward pro residues; the sequence is PEPPPPPLPLQTPPPR. Thr-229 is subject to Phosphothreonine. Ser-236 carries the post-translational modification Phosphoserine. Positions 236-288 are disordered; that stretch reads SDTEEDDFTDNQKHKPPKVPKIKEDDIEVKKRKRKEEGEKEKKPRKKVPKQLG. Thr-238 carries the post-translational modification Phosphothreonine. A Glycyl lysine isopeptide (Lys-Gly) (interchain with G-Cter in SUMO2) cross-link involves residue Lys-258. A Phosphoserine modification is found at Ser-297. Disordered regions lie at residues 322 to 345, 400 to 424, 559 to 584, 657 to 709, 785 to 818, 849 to 893, 948 to 975, 1003 to 1185, and 1288 to 1314; these read DALKKESTPKVPVTPSSSSLPKPP, ATSDGSPLSESGGENGNTTHPTFPS, LQADEEREKNGSDDDDDEKPGKRVIG, LTSA…ASAS, ATPKKLDSTQTAHSSSLIAGHTGPVPKKPQDLAH, GLQR…SLTQ, YRLPLSTPSPGNGSQGPHPLVSRTAPST, ASPK…GSSV, and PLPAHLQQAFNDGGQSKGDTKLPRKPQ. The span at 330–341 shows a compositional bias: low complexity; the sequence is PKVPVTPSSSSL. Residues Ser-402, Ser-405, and Ser-408 each carry the phosphoserine modification. The span at 415–424 shows a compositional bias: polar residues; that stretch reads GNTTHPTFPS. 2 stretches are compositionally biased toward basic and acidic residues: residues 560–570 and 673–684; these read QADEEREKNGS and KVKECSPKKDPK. A Phosphoserine modification is found at Ser-570. Residues 685–709 show a composition bias toward low complexity; that stretch reads APASVVASGGGPSTSSSTSIVASAS. Positions 792 to 801 are enriched in polar residues; that stretch reads STQTAHSSSL. Low complexity predominate over residues 849 to 879; it reads GLQRSSQIHASSSSQTHVSSSQAQAAASSHA. Polar residues predominate over residues 883-893; sequence SEAQDASSLTQ. Positions 1003–1013 are enriched in low complexity; sequence ASPKLAASPKP. Residues 1014 to 1028 are compositionally biased toward pro residues; the sequence is ATSPKPLPSPKPSVS. Residues 1029–1040 show a composition bias toward low complexity; sequence PKPSLSAKPSIS. An N6-acetyllysine modification is found at Lys-1036. Composition is skewed to polar residues over residues 1057-1132 and 1142-1153; these read PSSS…NSLS and RGSNLNSSGANR. The residue at position 1091 (Ser-1091) is a Phosphoserine. Position 1116 is an N6-acetyllysine (Lys-1116). Over residues 1305 to 1314 the composition is skewed to basic and acidic residues; it reads GDTKLPRKPQ.

It belongs to the ubinuclein family.

This Mus musculus (Mouse) protein is Ubinuclein-2 (Ubn2).